The following is a 2510-amino-acid chain: Highly reducing polyketide synthase g433 (2510 aa).

The segment at 1–54 is disordered; that stretch reads MAPGRTDVTVAENGNGLHTAHNGVSNGTSNGTNGTSHTSNGTNSSAKTTSNGVH. Residues 22–45 show a composition bias toward low complexity; that stretch reads NGVSNGTSNGTNGTSHTSNGTNSS. The 420-residue stretch at 58–477 folds into the Ketosynthase family 3 (KS3) domain; the sequence is DIPIAIVGMG…GANAHAVIDS (420 aa). Residues C229, H365, and H400 each act as for beta-ketoacyl synthase activity in the active site. The interval 574–880 is malonyl-CoA:ACP transacylase (MAT) domain; it reads FVFTGQGAQW…VPTLVRGQND (307 aa). The segment at 942–1070 is N-terminal hotdog fold; sequence HDLLGCQVFE…GQVKAGRADS (129 aa). Positions 942–1226 are dehydratase (DH) domain; sequence HDLLGCQVFE…NLRLAPAADD (285 aa). Residues 942–1229 enclose the PKS/mFAS DH domain; it reads HDLLGCQVFE…LAPAADDTGG (288 aa). The active-site Proton acceptor; for dehydratase activity is the H974. The tract at residues 1083-1229 is C-terminal hotdog fold; sequence PRKVSSTRWY…LAPAADDTGG (147 aa). The active-site Proton donor; for dehydratase activity is the D1144. Positions 1395–1574 are methyltransferase (CMet) domain; the sequence is DFLGLVSHDK…FDGAEAVIYD (180 aa). Residues 1787-2097 form an enoyl reductase (ER) (ER) domain region; sequence GSLKTLRWVQ…KGQHMGKLVI (311 aa). Positions 2122–2296 are ketoreductase (KR) domain; it reads SYLLVGGLGG…ASVLDISIIE (175 aa). The region spanning 2419–2496 is the Carrier domain; the sequence is SSVSFLANEI…KLGEAAAEGL (78 aa). S2456 bears the O-(pantetheine 4'-phosphoryl)serine mark.

The protein operates within mycotoxin biosynthesis. Its function is as follows. Highly reducing polyketide synthase; part of the gene cluster that mediates the biosynthesis of 1233A, a natural compound known as an inhibitor of HMG-CoA synthase in the mevalonate pathway and with antibacterial and antifungal activities. The highly reducing polyketide synthase g433 gene is responsible for the 1233A backbone biosynthesis and the cytochrome P450 monooxygenase g430 catalyzes oxidation of the backbone. The chain is Highly reducing polyketide synthase g433 from Fusarium sp.